A 1079-amino-acid chain; its full sequence is DNA-directed RNA polymerase subunit beta (1079 aa).

The interval arginine 963–arginine 982 is disordered. A compositionally biased stretch (polar residues) spans glycine 966–proline 975.

Belongs to the RNA polymerase beta chain family. As to quaternary structure, in plastids the minimal PEP RNA polymerase catalytic core is composed of four subunits: alpha, beta, beta', and beta''. When a (nuclear-encoded) sigma factor is associated with the core the holoenzyme is formed, which can initiate transcription.

It localises to the plastid. It is found in the chloroplast. It carries out the reaction RNA(n) + a ribonucleoside 5'-triphosphate = RNA(n+1) + diphosphate. In terms of biological role, DNA-dependent RNA polymerase catalyzes the transcription of DNA into RNA using the four ribonucleoside triphosphates as substrates. In Pelargonium hortorum (Common geranium), this protein is DNA-directed RNA polymerase subunit beta.